Reading from the N-terminus, the 448-residue chain is Tubulin beta-1 chain (448 aa).

GTP contacts are provided by glutamine 11, glutamate 72, serine 141, glycine 145, threonine 146, glycine 147, asparagine 207, and asparagine 229. Glutamate 72 lines the Mg(2+) pocket. The segment at 424 to 448 (QQYQDAGMDDDEAEEAYEEEEPVEE) is disordered. Over residues 430 to 448 (GMDDDEAEEAYEEEEPVEE) the composition is skewed to acidic residues.

It belongs to the tubulin family. Dimer of alpha and beta chains. A typical microtubule is a hollow water-filled tube with an outer diameter of 25 nm and an inner diameter of 15 nM. Alpha-beta heterodimers associate head-to-tail to form protofilaments running lengthwise along the microtubule wall with the beta-tubulin subunit facing the microtubule plus end conferring a structural polarity. Microtubules usually have 13 protofilaments but different protofilament numbers can be found in some organisms and specialized cells. Requires Mg(2+) as cofactor.

It localises to the cytoplasm. The protein resides in the cytoskeleton. Its function is as follows. Tubulin is the major constituent of microtubules, a cylinder consisting of laterally associated linear protofilaments composed of alpha- and beta-tubulin heterodimers. Microtubules grow by the addition of GTP-tubulin dimers to the microtubule end, where a stabilizing cap forms. Below the cap, tubulin dimers are in GDP-bound state, owing to GTPase activity of alpha-tubulin. In Colletotrichum gloeosporioides (Anthracnose fungus), this protein is Tubulin beta-1 chain (TUB1).